The primary structure comprises 393 residues: Argininosuccinate synthase (393 aa).

Residues 10 to 18 and alanine 37 each bind ATP; that span reads AYSGGLDTS. Tyrosine 88 serves as a coordination point for L-citrulline. Glycine 118 contributes to the ATP binding site. Residues threonine 120, asparagine 124, and aspartate 125 each contribute to the L-aspartate site. An L-citrulline-binding site is contributed by asparagine 124. L-citrulline is bound by residues arginine 128, serine 176, serine 185, glutamate 261, and tyrosine 273.

The protein belongs to the argininosuccinate synthase family. Type 1 subfamily. Homotetramer.

The protein resides in the cytoplasm. The enzyme catalyses L-citrulline + L-aspartate + ATP = 2-(N(omega)-L-arginino)succinate + AMP + diphosphate + H(+). The protein operates within amino-acid biosynthesis; L-arginine biosynthesis; L-arginine from L-ornithine and carbamoyl phosphate: step 2/3. This is Argininosuccinate synthase from Carsonella ruddii (strain PV).